Consider the following 952-residue polypeptide: Eukaryotic initiation factor 4F subunit p150 (952 aa).

3 disordered regions span residues 1-77 (MTDE…NYNG), 115-389 (GSAP…DAGT), and 481-575 (VIPP…LVPS). Polar residues predominate over residues 7-16 (HPTQSASKQE). Positions 29 to 46 (ESQQQRGYTNYNNGSNYT) are enriched in low complexity. Over residues 47-56 (QKKPYNSNRP) the composition is skewed to polar residues. The segment covering 65 to 74 (GPNRYNNRGN) has biased composition (low complexity). A compositionally biased stretch (basic and acidic residues) spans 140-151 (SGEHLDLKEQHK). Residues 154–166 (LQSQERSTVSPQP) show a composition bias toward polar residues. S163 carries the post-translational modification Phosphoserine. Residues 175 to 191 (DSTSTSTPTPTPSTNDS) show a composition bias toward low complexity. T181 carries the post-translational modification Phosphothreonine. The segment at 188–299 (TNDSKASSEE…KEESTPKVLT (112 aa)) is interaction with PAB1. Residue S195 is modified to Phosphoserine. Over residues 218 to 228 (AALEKKRKEQL) the composition is skewed to basic and acidic residues. The span at 229 to 244 (EGSSGNNNIPMKTTPE) shows a compositional bias: polar residues. Composition is skewed to basic and acidic residues over residues 246 to 276 (VEEK…KQET), 283 to 294 (QGEKGQIKEEST), and 309 to 333 (QQKE…ETKS). Polar residues predominate over residues 355–368 (TEQSNIDESATTPA). Position 503 is a phosphoserine (S503). Basic and acidic residues-rich tracts occupy residues 504–521 (RGHD…DRAN) and 532–569 (RMND…KEEV). The region spanning 607–850 (ERKMKSLLNK…IDIKELRHDK (244 aa)) is the MIF4G domain. The segment at 870–952 (EEERQRQLKN…ALMGESDDEE (83 aa)) is disordered. Low complexity predominate over residues 879–894 (NNSRSNSRRTNNSSNR). S883 carries the phosphoserine modification. At T888 the chain carries Phosphothreonine. S892, S896, S908, and S948 each carry phosphoserine. Residues 908-922 (SFITTRTYSQRNSQR) are compositionally biased toward polar residues.

Belongs to the eukaryotic initiation factor 4G family. In terms of assembly, component of the eIF4F complex, which composition varies with external and internal environmental conditions. It is composed of at least eIF4A (TIF1/TIF2), eIF4E (TIF45) and eIF4G (TIF4631 or TIF4632). Interacts with PAT1 in a RNA-dependent manner.

The protein localises to the cytoplasm. Its subcellular location is the P-body. It localises to the stress granule. Functionally, component of the eIF4F complex, which interacts with the mRNA cap structure and serves as an initial point of assembly for the translation apparatus. Stimulates translation by interaction with polyadenylate-binding protein PAB1, bringing the 5'- and 3'-ends of the mRNA in proximity. The formation of this circular mRNP structure appears to be critical for the synergistic effects of the cap and the poly(A) tail in facilitating translation initiation, recycling of ribosomes, and mRNA stability. TIF4631 is probably essential when TIF4632 is missing. The sequence is that of Eukaryotic initiation factor 4F subunit p150 from Saccharomyces cerevisiae (strain ATCC 204508 / S288c) (Baker's yeast).